We begin with the raw amino-acid sequence, 571 residues long: Proline--tRNA ligase (571 aa).

Belongs to the class-II aminoacyl-tRNA synthetase family. ProS type 1 subfamily. Homodimer.

Its subcellular location is the cytoplasm. The catalysed reaction is tRNA(Pro) + L-proline + ATP = L-prolyl-tRNA(Pro) + AMP + diphosphate. Functionally, catalyzes the attachment of proline to tRNA(Pro) in a two-step reaction: proline is first activated by ATP to form Pro-AMP and then transferred to the acceptor end of tRNA(Pro). As ProRS can inadvertently accommodate and process non-cognate amino acids such as alanine and cysteine, to avoid such errors it has two additional distinct editing activities against alanine. One activity is designated as 'pretransfer' editing and involves the tRNA(Pro)-independent hydrolysis of activated Ala-AMP. The other activity is designated 'posttransfer' editing and involves deacylation of mischarged Ala-tRNA(Pro). The misacylated Cys-tRNA(Pro) is not edited by ProRS. This is Proline--tRNA ligase from Vibrio cholerae serotype O1 (strain ATCC 39541 / Classical Ogawa 395 / O395).